Reading from the N-terminus, the 303-residue chain is UDP-3-O-acyl-N-acetylglucosamine deacetylase (303 aa).

Zn(2+) is bound by residues H78, H237, and D241. H264 serves as the catalytic Proton donor.

This sequence belongs to the LpxC family. The cofactor is Zn(2+).

It catalyses the reaction a UDP-3-O-[(3R)-3-hydroxyacyl]-N-acetyl-alpha-D-glucosamine + H2O = a UDP-3-O-[(3R)-3-hydroxyacyl]-alpha-D-glucosamine + acetate. Its pathway is glycolipid biosynthesis; lipid IV(A) biosynthesis; lipid IV(A) from (3R)-3-hydroxytetradecanoyl-[acyl-carrier-protein] and UDP-N-acetyl-alpha-D-glucosamine: step 2/6. Functionally, catalyzes the hydrolysis of UDP-3-O-myristoyl-N-acetylglucosamine to form UDP-3-O-myristoylglucosamine and acetate, the committed step in lipid A biosynthesis. This Xanthomonas campestris pv. campestris (strain 8004) protein is UDP-3-O-acyl-N-acetylglucosamine deacetylase.